Reading from the N-terminus, the 878-residue chain is Enoyl-CoA isomerase/hydratase claC (878 aa).

A disordered region spans residues 541 to 561 (VGPASTEATSPVVEPSTMESD). Residues 677-681 (AGADL) and Gly-724 contribute to the substrate site.

It belongs to the enoyl-CoA hydratase/isomerase family.

The protein operates within secondary metabolite biosynthesis. Its function is as follows. Enoyl-CoA isomerase/hydratase; part of the cla gene cluster that produces clavatol and ortho-quinone methide. The clavatol biosynthesis cluster cla and the terrestric acid cluster tra are both involved in the production of peniphenones and penilactones. The non-reducing PKS claF is responsible for the formation of clavatol from successive condensations of 3 malonyl-CoA units, presumably with a simple acetyl-CoA starter unit, and 2 methylation steps. The esterase claE probably collaborates with claF by catalyzing the hydrolysis of ACP-bound acyl intermediates to free the ACP from stalled intermediates. The clavatol oxidase claD then converts clavatol to hydroxyclavatol. Spontaneous dehydration of hydroxyclavatol leads to the accumulation of the highly active ortho-quinone methide. On the other hand, the PKS-NRPS hybrid traA is involved in the formation of crustosic acid, with the help of traB and traD. The polyketide synthase module (PKS) of traA is responsible for the synthesis of the polyketide backbone via the condensation of an acetyl-CoA starter unit with 3 malonyl-CoA units. The downstream nonribosomal peptide synthetase (NRPS) module then amidates the carboxyl end of the polyketide with L-malic acid. Because traA lacks a designated enoylreductase (ER) domain, the required activity is provided the enoyl reductase traG. Crustosic acid undergoes decarboxylation and isomerization to the terrestric acid, catalyzed by the 2-oxoglutarate-dependent dioxygenase traH. Both acids are further converted to the 2 gamma-butyrolactones (R)-5-methyltetronic acid and (S)-5-carboxylmethyltetronic acid, with involvement of the cytochrome P450 monooxygenase claJ. Spontaneous addition of the methide to these gamma-butyrolactones leads to peniphenone D and penilactone D, which undergo again stereospecific attacking by methide to give penilactones A and B. The function of the enoyl-CoA isomerase/hydratase claC has not been investigated yet. In Penicillium crustosum (Blue mold fungus), this protein is Enoyl-CoA isomerase/hydratase claC.